Consider the following 361-residue polypeptide: GTPase Obg (361 aa).

The Obg domain maps to 1–159 (MKFVDEAFID…KNLKLELKVL (159 aa)). Residues 160–334 (ADVGLLGMPN…LIKTIYQHVK (175 aa)) enclose the OBG-type G domain. GTP contacts are provided by residues 166-173 (GMPNAGKS), 191-195 (FTTLH), 213-216 (DLPG), 284-287 (NKLD), and 315-317 (SAL). The Mg(2+) site is built by serine 173 and threonine 193. The tract at residues 339–361 (SEQPVEEVDPRFVPLPPESPETP) is disordered. Pro residues predominate over residues 351–361 (VPLPPESPETP).

It belongs to the TRAFAC class OBG-HflX-like GTPase superfamily. OBG GTPase family. Monomer. Mg(2+) serves as cofactor.

Its subcellular location is the cytoplasm. An essential GTPase which binds GTP, GDP and possibly (p)ppGpp with moderate affinity, with high nucleotide exchange rates and a fairly low GTP hydrolysis rate. Plays a role in control of the cell cycle, stress response, ribosome biogenesis and in those bacteria that undergo differentiation, in morphogenesis control. The protein is GTPase Obg of Polaromonas sp. (strain JS666 / ATCC BAA-500).